The primary structure comprises 858 residues: Chitin synthase 2 (858 aa).

A compositionally biased stretch (basic and acidic residues) spans 1–12; sequence MYPEGPKPEHDQ. The disordered stretch occupies residues 1 to 116; that stretch reads MYPEGPKPEH…GQAPRRQPRR (116 aa). A compositionally biased stretch (polar residues) spans 15–24; that stretch reads LQDTQFSNQP. Pro residues-rich tracts occupy residues 52–68 and 76–89; these read AYPPTQYPTSPPPPNFP and PYPPFNNNPSPVSP. The next 7 membrane-spanning stretches (helical) occupy residues 500-517, 540-560, 586-606, 621-641, 665-685, 799-819, and 825-845; these read RWLNGSFFAGVYALYHWR, TYNLIFSWFALGNFYLTFFIL, LHTVFNYIYIVLIVIQFIMAL, MVFFAILMVYMMFAAIWITVV, NIIISLCATYVMYFVSSFMFL, VLAWIISNLALVVAIANTTVI, and ASIYLGFILWSVAGLSVIRFT.

Belongs to the chitin synthase family.

Its subcellular location is the cell membrane. The catalysed reaction is [(1-&gt;4)-N-acetyl-beta-D-glucosaminyl](n) + UDP-N-acetyl-alpha-D-glucosamine = [(1-&gt;4)-N-acetyl-beta-D-glucosaminyl](n+1) + UDP + H(+). Polymerizes chitin, a structural polymer of the cell wall and septum, by transferring the sugar moiety of UDP-GlcNAc to the non-reducing end of the growing chitin polymer. This is Chitin synthase 2 (CHS2) from Rhizopus oligosporus (Rhizopus microsporus var. oligosporus).